The sequence spans 468 residues: Phosphatidylglycerol--prolipoprotein diacylglyceryl transferase (468 aa).

The next 3 membrane-spanning stretches (helical) occupy residues 21–41 (LPVRAYAVCVITGIIVALLIG), 56–76 (YDIALWAVPFGLIGGRLYHLA), and 96–116 (IWDGGLGIWGAVTLGVMGAWI). R144 contacts a 1,2-diacyl-sn-glycero-3-phospho-(1'-sn-glycerol). The next 3 helical transmembrane spans lie at 192–212 (VVQPTFLYELIWNVLVFVALI), 218–238 (FIIGHGRLFGFYVAFYCAGRF), and 256–276 (INSFTSTFVFIGAVVYIILAP). The disordered stretch occupies residues 349–468 (VVQVADRDGE…RWWRLRRRRQ (120 aa)). Residues 391-406 (AEAASAAPEEPAALAS) show a composition bias toward low complexity. A compositionally biased stretch (basic and acidic residues) spans 445 to 455 (DGIRRQDDFSS). Residues 456–468 (RRRRWWRLRRRRQ) show a composition bias toward basic residues.

This sequence belongs to the Lgt family.

The protein localises to the cell membrane. It catalyses the reaction L-cysteinyl-[prolipoprotein] + a 1,2-diacyl-sn-glycero-3-phospho-(1'-sn-glycerol) = an S-1,2-diacyl-sn-glyceryl-L-cysteinyl-[prolipoprotein] + sn-glycerol 1-phosphate + H(+). The protein operates within protein modification; lipoprotein biosynthesis (diacylglyceryl transfer). Catalyzes the transfer of the diacylglyceryl group from phosphatidylglycerol to the sulfhydryl group of the N-terminal cysteine of a prolipoprotein, the first step in the formation of mature lipoproteins. The polypeptide is Phosphatidylglycerol--prolipoprotein diacylglyceryl transferase (Mycobacterium bovis (strain ATCC BAA-935 / AF2122/97)).